Consider the following 467-residue polypeptide: Asparagine--tRNA ligase (467 aa).

Belongs to the class-II aminoacyl-tRNA synthetase family. As to quaternary structure, homodimer.

It localises to the cytoplasm. It catalyses the reaction tRNA(Asn) + L-asparagine + ATP = L-asparaginyl-tRNA(Asn) + AMP + diphosphate + H(+). This chain is Asparagine--tRNA ligase, found in Legionella pneumophila (strain Corby).